Here is a 251-residue protein sequence, read N- to C-terminus: GTP cyclohydrolase 1 type 2 homolog (251 aa).

Residues His-62, His-63, Asp-103, His-215, and Glu-219 each coordinate a divalent metal cation.

The protein belongs to the GTP cyclohydrolase I type 2/NIF3 family. In terms of assembly, homohexamer.

This Mycoplasmopsis pulmonis (strain UAB CTIP) (Mycoplasma pulmonis) protein is GTP cyclohydrolase 1 type 2 homolog.